The chain runs to 247 residues: Cytochrome c oxidase subunit 2 (247 aa).

Residues 12-38 (DVPTPWGLYFQDSSTPNQEGIIELHDN) lie on the Mitochondrial intermembrane side of the membrane. The chain crosses the membrane as a helical span at residues 39–59 (IMFYLVLILCTVSWLLFSIVK). Residues 60–78 (DSSKNPLPHKYLVHGQTIE) are Mitochondrial matrix-facing. A helical transmembrane segment spans residues 79–101 (IIWTILPAVVLLIIAFPSFILLY). Over 102–247 (LCDEVISPAM…KEFLTWLNEQ (146 aa)) the chain is Mitochondrial intermembrane. Cu cation-binding residues include H182, C217, E219, C221, H225, and M228. Residue E219 coordinates Mg(2+).

The protein belongs to the cytochrome c oxidase subunit 2 family. In terms of assembly, component of the cytochrome c oxidase (complex IV, CIV), a multisubunit enzyme composed of a catalytic core of 3 subunits and several supernumerary subunits. The complex exists as a monomer or a dimer and forms supercomplexes (SCs) in the inner mitochondrial membrane with ubiquinol-cytochrome c oxidoreductase (cytochrome b-c1 complex, complex III, CIII). Cu cation is required as a cofactor. Post-translationally, the signal sequence of COX2 is processed by IMP1.

The protein localises to the mitochondrion inner membrane. It catalyses the reaction 4 Fe(II)-[cytochrome c] + O2 + 8 H(+)(in) = 4 Fe(III)-[cytochrome c] + 2 H2O + 4 H(+)(out). Its function is as follows. Component of the cytochrome c oxidase, the last enzyme in the mitochondrial electron transport chain which drives oxidative phosphorylation. The respiratory chain contains 3 multisubunit complexes succinate dehydrogenase (complex II, CII), ubiquinol-cytochrome c oxidoreductase (cytochrome b-c1 complex, complex III, CIII) and cytochrome c oxidase (complex IV, CIV), that cooperate to transfer electrons derived from NADH and succinate to molecular oxygen, creating an electrochemical gradient over the inner membrane that drives transmembrane transport and the ATP synthase. Cytochrome c oxidase is the component of the respiratory chain that catalyzes the reduction of oxygen to water. Electrons originating from reduced cytochrome c in the intermembrane space (IMS) are transferred via the dinuclear copper A center (CU(A)) of subunit 2 and heme A of subunit 1 to the active site in subunit 1, a binuclear center (BNC) formed by heme A3 and copper B (CU(B)). The BNC reduces molecular oxygen to 2 water molecules using 4 electrons from cytochrome c in the IMS and 4 protons from the mitochondrial matrix. The polypeptide is Cytochrome c oxidase subunit 2 (COX2) (Cyberlindnera mrakii (Yeast)).